Consider the following 505-residue polypeptide: Sodium/sialic acid symporter NanT (505 aa).

The next 5 helical transmembrane spans lie at 9–29 (LNYIALFAYLGAIMAVGVYFA), 45–65 (IPGWAAGFSVFATTLSSITFM), 80–100 (IGQYVAIAILPIVFWFYIPFF), 128–148 (FMLFHIGRIAIVTYLTALALM), and 155–175 (PLMIVFLIGVLCIIYTFLGGI). Na(+) is bound at residue alanine 56. An N-acetyl-alpha-neuraminate-binding site is contributed by threonine 58. Leucine 59 contributes to the Na(+) binding site. N-acetyl-alpha-neuraminate-binding residues include serine 60, threonine 63, glutamine 82, and arginine 135. Aspartate 182 is a Na(+) binding site. Helical transmembrane passes span 183–203 (VIQGVMLSVAAILIFVVICFN), 227–247 (FSWSWTDSTIPVLMIGFFFAS), 280–300 (LVACVPIFFFAVGSALFAYYT), and 318–338 (FYVISQMPVGVAGLIIAAIFA). Positions 339, 342, 343, 345, and 346 each coordinate Na(+). Transmembrane regions (helical) follow at residues 378–398 (TLTVVAGLLGVVASTYLIMSN), 406–426 (FNSLLGLMGGPMTGLFMLGIF), 435–455 (ALLGVVASIATVLWVRSATDL), and 457–477 (FFFYGVIGTLMVVIVGYLTAP).

Belongs to the sodium:solute symporter (SSF) (TC 2.A.21) family.

It localises to the cell inner membrane. The enzyme catalyses N-acetyl-alpha-neuraminate(out) + 2 Na(+)(out) = N-acetyl-alpha-neuraminate(in) + 2 Na(+)(in). Its function is as follows. Symporter that uses the Na(+) gradient as the driving force for the uptake of the sialic acid N-acetylneuraminic acid (Neu5Ac). Might play a role in persistence after colonization. In Aliivibrio fischeri (strain ATCC 700601 / ES114) (Vibrio fischeri), this protein is Sodium/sialic acid symporter NanT.